Consider the following 155-residue polypeptide: Microsomal glutathione S-transferase 1 (155 aa).

Over 3–9 (NLSQLME) the chain is Lumenal. A helical membrane pass occupies residues 10-33 (NEVFMAFASYTTIVLSKMNFMSTA). At 34–62 (TAFYRLTKKVFANPEDCAGFGKGENAKKY) the chain is on the cytoplasmic side. Arg-38 provides a ligand contact to glutathione. An N6-acetyllysine mark is found at Lys-42, Lys-55, and Lys-60. The helical transmembrane segment at 63 to 96 (LRTDDRVERVRRAHLNDLENIVPFLGIGLLYSLS) threads the bilayer. Positions 73, 74, 76, and 81 each coordinate glutathione. Topologically, residues 97–99 (GPD) are lumenal. Residues 100–123 (LSTAILHFRLFVRARIYHTIAYLT) traverse the membrane as a helical segment. Tyr-121 contacts glutathione. At 124–128 (PLPQP) the chain is on the cytoplasmic side. The helical transmembrane segment at 129–148 (NRALAFFIGYGVTLSMAYRL) threads the bilayer. Topologically, residues 149 to 155 (LKSKLYL) are lumenal.

The protein belongs to the MAPEG family. As to quaternary structure, homotrimer; The trimer binds only one molecule of glutathione.

It is found in the endoplasmic reticulum membrane. The protein localises to the mitochondrion outer membrane. It catalyses the reaction RX + glutathione = an S-substituted glutathione + a halide anion + H(+). Conjugation of reduced glutathione to a wide number of exogenous and endogenous hydrophobic electrophiles. This chain is Microsomal glutathione S-transferase 1 (MGST1), found in Bos taurus (Bovine).